A 364-amino-acid polypeptide reads, in one-letter code: 3-dehydroquinate synthase (364 aa).

Residues 71 to 76 (DGEQYK), 105 to 109 (GVIGD), 129 to 130 (TT), lysine 142, lysine 151, and 169 to 172 (CLKT) each bind NAD(+). Zn(2+)-binding residues include glutamate 184, histidine 247, and histidine 264.

Belongs to the sugar phosphate cyclases superfamily. Dehydroquinate synthase family. It depends on Co(2+) as a cofactor. The cofactor is Zn(2+). NAD(+) is required as a cofactor.

It localises to the cytoplasm. It carries out the reaction 7-phospho-2-dehydro-3-deoxy-D-arabino-heptonate = 3-dehydroquinate + phosphate. The protein operates within metabolic intermediate biosynthesis; chorismate biosynthesis; chorismate from D-erythrose 4-phosphate and phosphoenolpyruvate: step 2/7. Its function is as follows. Catalyzes the conversion of 3-deoxy-D-arabino-heptulosonate 7-phosphate (DAHP) to dehydroquinate (DHQ). This Klebsiella pneumoniae (strain 342) protein is 3-dehydroquinate synthase.